The chain runs to 318 residues: Ankyrin repeat and SOCS box protein 7 (318 aa).

ANK repeat units lie at residues 13–42 (QEEL…SPNG), 46–75 (NGWT…DPTV), 80–109 (GGFT…RSDI), 116–145 (DGWT…EVDP), 149–178 (KGTT…NIDI), 180–208 (NGFL…DTDL), and 213–242 (DGQT…DTNT). Residues 265-318 (LDFLQEVTRQPRNLQDLCRIKIRQCIGLQNLKLLDELPIAKVMKDYLKHKFDDI) form the SOCS box domain.

It belongs to the ankyrin SOCS box (ASB) family. As to quaternary structure, interacts with CUL5. Interacts with RNF7. Interacts with PSRC1.

It participates in protein modification; protein ubiquitination. Its function is as follows. Probable substrate-recognition component of a SCF-like ECS (Elongin-Cullin-SOCS-box protein) E3 ubiquitin-protein ligase complex which mediates the ubiquitination and subsequent proteasomal degradation of target proteins. Plays a role in spindle dynamics and genome integrity by targeting the mitotic progression protein PSRC1 for proteasomal degradation in a cell cycle-dependent manner. Also participates in meiosis by mediating the proper attachment between kinetochores and microtubules. The protein is Ankyrin repeat and SOCS box protein 7 (ASB7) of Macaca fascicularis (Crab-eating macaque).